A 151-amino-acid chain; its full sequence is Small ribosomal subunit protein uS15 (151 aa).

It belongs to the universal ribosomal protein uS15 family.

The polypeptide is Small ribosomal subunit protein uS15 (RpS13) (Spodoptera frugiperda (Fall armyworm)).